A 352-amino-acid polypeptide reads, in one-letter code: Ion-translocating oxidoreductase complex subunit D (352 aa).

The next 5 membrane-spanning stretches (helical) occupy residues 20-40 (IMLLVLLAAVPGIAAQLWFFG), 42-62 (GTLVQILLASVSALLAEALVL), 78-109 (ALLTGLLLAVSIPPLAPWWMVVLGTVFAVIIA), 123-143 (PAMIGYVVLLISFPVQMTSWL), and 148-168 (IAVNIPGFIDAIQVIFSGHTA). Residue Thr-187 is modified to FMN phosphoryl threonine. 5 helical membrane passes run 214 to 234 (ILAGAGWQWVNLAWLAGGLWL), 242 to 262 (WHIPLSFLVTLALCATLGWLF), 267 to 287 (LAAPQIHLLSGATMLGAFFIL), 301 to 321 (LIFGALAGLLVWLIRSFGGYP), and 322 to 342 (DGVAFAVLLANITVPLIDYYT).

Belongs to the NqrB/RnfD family. The complex is composed of six subunits: RsxA, RsxB, RsxC, RsxD, RsxE and RsxG. It depends on FMN as a cofactor.

The protein localises to the cell inner membrane. Functionally, part of a membrane-bound complex that couples electron transfer with translocation of ions across the membrane. Required to maintain the reduced state of SoxR. The chain is Ion-translocating oxidoreductase complex subunit D from Escherichia coli (strain SE11).